We begin with the raw amino-acid sequence, 326 residues long: DnaJ homolog subfamily B member 6 (326 aa).

Residues 2-69 (VDYYEVLGVQ…KKRDIYDKYG (68 aa)) form the J domain. Residues 2 to 146 (VDYYEVLGVQ…TGSFFSAFSG (145 aa)) form an interaction with HSP70 region. An interaction with KRT18 region spans residues 119-242 (FEDFFGNRRG…ADDDALAEER (124 aa)). R135 is modified (omega-N-methylarginine). The interval 249 to 326 (ALPAQPAGLR…KKKKSTKGNH (78 aa)) is disordered. Phosphoserine is present on S277.

In terms of assembly, homooligomer. Interacts with BAG3, HSPB8 and STUB1. Interacts with ALKBH1. Interacts with HSP70, KRT18 and PTTG. Interacts with histone deacetylases HDAC4, HDAC6, and SIRT2, HDAC activity is required for antiaggregation. As to expression, widely expressed. Highest levels in testis and brain, and lower levels in heart, spleen, intestine, ovary, placenta, lung, kidney, pancreas, thymus, prostate, skeletal muscle, liver and leukocytes. In testis, expressed in germ cells in the earlier stages of differentiation pathway as well as in spermatids. In brain, expressed at a higher level in hippocampus and thalamus and a lower level in amygdala, substantia nigra, corpus callosum and caudate nucleus.

It localises to the cytoplasm. It is found in the perinuclear region. The protein localises to the nucleus. Its subcellular location is the myofibril. The protein resides in the sarcomere. It localises to the z line. Has a stimulatory effect on the ATPase activity of HSP70 in a dose-dependent and time-dependent manner and hence acts as a co-chaperone of HSP70. Plays an indispensable role in the organization of KRT8/KRT18 filaments. Acts as an endogenous molecular chaperone for neuronal proteins including huntingtin. Suppresses aggregation and toxicity of polyglutamine-containing, aggregation-prone proteins. Also reduces cellular toxicity and caspase-3 activity. Its function is as follows. Isoform B but not isoform A inhibits huntingtin aggregation. The chain is DnaJ homolog subfamily B member 6 (DNAJB6) from Homo sapiens (Human).